A 585-amino-acid chain; its full sequence is Pyruvate kinase (585 aa).

Arg-32 lines the substrate pocket. 4 residues coordinate K(+): Asn-34, Ser-36, Asp-66, and Thr-67. An ATP-binding site is contributed by 34–37; the sequence is NFSH. Residues Arg-73 and Lys-156 each contribute to the ATP site. Glu-222 serves as a coordination point for Mg(2+). Residues Gly-245, Asp-246, and Thr-278 each coordinate substrate. Asp-246 is a binding site for Mg(2+).

The protein belongs to the pyruvate kinase family. It in the C-terminal section; belongs to the PEP-utilizing enzyme family. In terms of assembly, homotetramer. The cofactor is Mg(2+). Requires K(+) as cofactor.

The enzyme catalyses pyruvate + ATP = phosphoenolpyruvate + ADP + H(+). It participates in carbohydrate degradation; glycolysis; pyruvate from D-glyceraldehyde 3-phosphate: step 5/5. The protein is Pyruvate kinase (pyk) of Bacillus licheniformis.